Here is a 370-residue protein sequence, read N- to C-terminus: MQKIKEYIKKLEEGCDLSSEEAEAALEEVLSTAEDGEIETFLLALKAKGEKPQEIVGFVRGMKKAGNMIKPNTPFRIVDTCGTGGDGLNTINVSTAAAIVTAAAGVPVAKHGNRAATSMTGSSDVLEALGIKVDLSPEYVRKTIEKIGIGFMFAPVFHPAMKRVAGVRKKLGVRTVFNILGPLTNPAGAKGQVVGVFDKNLCEPIAYALAELGTEHALVVHGDGMDEITNTGETYVAELKNGKVSTYTLTPESLGMLRASPGDTKGGSPKENARDLLCIFKGQKGPKRDLIILNAAAALYVSGIVGSIRQAIPIAEDAIDSGKVMVKFNQFRTFTGEFYQIDKKQGFIPGKTALSPSRVSMLSPASGEQA.

Residues Gly-82, 85 to 86, Thr-90, 92 to 95, 110 to 118, and Ser-122 contribute to the 5-phospho-alpha-D-ribose 1-diphosphate site; these read GD, NVST, and KHGNRAATS. Gly-82 lines the anthranilate pocket. Position 94 (Ser-94) interacts with Mg(2+). Residue Asn-113 coordinates anthranilate. Arg-168 contacts anthranilate. Mg(2+) contacts are provided by Asp-226 and Glu-227.

Belongs to the anthranilate phosphoribosyltransferase family. In terms of assembly, homodimer. Requires Mg(2+) as cofactor.

It carries out the reaction N-(5-phospho-beta-D-ribosyl)anthranilate + diphosphate = 5-phospho-alpha-D-ribose 1-diphosphate + anthranilate. It participates in amino-acid biosynthesis; L-tryptophan biosynthesis; L-tryptophan from chorismate: step 2/5. Functionally, catalyzes the transfer of the phosphoribosyl group of 5-phosphorylribose-1-pyrophosphate (PRPP) to anthranilate to yield N-(5'-phosphoribosyl)-anthranilate (PRA). The sequence is that of Anthranilate phosphoribosyltransferase from Methanosarcina mazei (strain ATCC BAA-159 / DSM 3647 / Goe1 / Go1 / JCM 11833 / OCM 88) (Methanosarcina frisia).